Here is a 159-residue protein sequence, read N- to C-terminus: Phosphopantetheine adenylyltransferase (159 aa).

Residue S8 coordinates substrate. Residues S8–F9 and H16 each bind ATP. Positions 40, 73, and 87 each coordinate substrate. ATP contacts are provided by residues G88–R90, E98, and Y122–T128.

This sequence belongs to the bacterial CoaD family. Homohexamer. The cofactor is Mg(2+).

The protein resides in the cytoplasm. The catalysed reaction is (R)-4'-phosphopantetheine + ATP + H(+) = 3'-dephospho-CoA + diphosphate. The protein operates within cofactor biosynthesis; coenzyme A biosynthesis; CoA from (R)-pantothenate: step 4/5. Functionally, reversibly transfers an adenylyl group from ATP to 4'-phosphopantetheine, yielding dephospho-CoA (dPCoA) and pyrophosphate. The chain is Phosphopantetheine adenylyltransferase from Corynebacterium efficiens (strain DSM 44549 / YS-314 / AJ 12310 / JCM 11189 / NBRC 100395).